A 136-amino-acid polypeptide reads, in one-letter code: Histone H3.3 (136 aa).

A disordered region spans residues 1–45 (MARTKQTARKSTGGKAPRKQLASKAARKAAPATGGVKKPHRYRPP). An N6,N6,N6-trimethyllysine; alternate modification is found at Lys-5. Lys-5 is subject to N6,N6-dimethyllysine; alternate. N6-methyllysine; alternate occurs at positions 5 and 10. Residue Lys-10 is modified to N6-acetyllysine; alternate. Position 11 is a phosphoserine (Ser-11). The residue at position 15 (Lys-15) is an N6,N6-dimethyllysine; alternate. N6-acetyllysine; alternate is present on residues Lys-15, Lys-19, Lys-24, Lys-28, and Lys-37. An N6-methyllysine; alternate mark is found at Lys-19, Lys-24, Lys-28, and Lys-37. The segment covering 19-32 (KQLASKAARKAAPA) has biased composition (low complexity). N6,N6,N6-trimethyllysine; alternate occurs at positions 28 and 37. N6,N6-dimethyllysine; alternate occurs at positions 28 and 37. 2 positions are modified to N6-acetyllysine: Lys-57 and Lys-65. Lys-80 is modified (N6,N6,N6-trimethyllysine; alternate). Lys-80 carries the post-translational modification N6,N6-dimethyllysine; alternate. Lys-80 is subject to N6-methyllysine; alternate. An N6-acetyllysine modification is found at Lys-123.

The protein belongs to the histone H3 family. In terms of assembly, the nucleosome is a histone octamer containing two molecules each of H2A, H2B, H3 and H4 assembled in one H3-H4 heterotetramer and two H2A-H2B heterodimers. The octamer wraps approximately 147 bp of DNA. In terms of processing, phosphorylated by ark1 to form H3S10ph in a cell cycle-dependent manner during mitosis and meiosis. H3S10ph is also formed by ssp2, promotes subsequent H3K14ac formation by gcn5, and is required for transcriptional activation through TBP recruitment to the promoters. Dephosphorylation is performed by sds21. Post-translationally, mono-, di- and trimethylated by the COMPASS complex to form H3K4me1/2/3. H3K4me activates gene expression by regulating transcription elongation and plays a role in telomere length maintenance. H3K4me enrichment correlates with transcription levels, and occurs in a 5' to 3' gradient with H3K4me3 enrichment at the 5'-end of genes, shifting to H3K4me2 and then H3K4me1. Methylated by clr4 to form H3K9me1. H3K9me1 represents a specific tag for epigenetic transcriptional repression by recruiting swi6/HP1 to methylated histones. Targeting to histone probably involves clr3 and rik1. Essential for silencing of centromeres and directional switching of the mating type. Methylated by set2 to form H3K36me. H3K36me represses gene expression. Methylated by dot1 to form H3K79me. H3K79me is required for association of SIR proteins with telomeric regions and for telomeric silencing. The COMPASS-mediated formation of H3K4me2/3 and the dot1-mediated formation of H3K79me require H2BK123ub1. Acetylation of histone H3 leads to transcriptional activation. H3K14ac formation by gcn5 is promoted by H3S10ph. H3K14ac can also be formed by esa1. H3K56ac formation occurs predominantly in newly synthesized H3 molecules during G1, S and G2/M of the cell cycle and may be involved in DNA repair. Acetylation at Lys-123 (H3K122ac) plays a central role in chromatin structure: localizes at the surface of the histone octamer and stimulates transcription, possibly by promoting nucleosome instability.

It is found in the nucleus. Its subcellular location is the chromosome. Its function is as follows. Core component of nucleosome. Nucleosomes wrap and compact DNA into chromatin, limiting DNA accessibility to the cellular machineries which require DNA as a template. Histones thereby play a central role in transcription regulation, DNA repair, DNA replication and chromosomal stability. DNA accessibility is regulated via a complex set of post-translational modifications of histones, also called histone code, and nucleosome remodeling. The protein is Histone H3.3 (hht3) of Schizosaccharomyces pombe (strain 972 / ATCC 24843) (Fission yeast).